Reading from the N-terminus, the 217-residue chain is Monomethylamine corrinoid protein 2 (217 aa).

The B12-binding N-terminal domain occupies 1 to 91; the sequence is MTNTEIFEKL…ELEKSKVEGE (91 aa). One can recognise a B12-binding domain in the interval 93-217; sequence TGLAITFVAE…AAKVALNIMK (125 aa). H106 is a methylcob(III)alamin binding site.

Belongs to the methylamine corrinoid protein family. In terms of assembly, can form a complex with MtmB.

It participates in one-carbon metabolism; methanogenesis from methylamine. Its function is as follows. Acts as a methyl group carrier between MtmB and MtbA. This Methanosarcina acetivorans (strain ATCC 35395 / DSM 2834 / JCM 12185 / C2A) protein is Monomethylamine corrinoid protein 2 (mtmC2).